The primary structure comprises 682 residues: Putative L-type lectin-domain containing receptor kinase I.1 (682 aa).

A signal peptide spans 1–19; sequence MAQRLHLLLLLFLICFVNL. The Extracellular portion of the chain corresponds to 20–292; that stretch reads ISFSSQQDLS…RPKKPEKTSP (273 aa). Residues 27–264 form a legume-lectin like region; sequence DLSFIYNGFN…YQYILGWSFS (238 aa). Asparagine 60, asparagine 130, asparagine 187, asparagine 210, and asparagine 231 each carry an N-linked (GlcNAc...) asparagine glycan. A helical membrane pass occupies residues 293 to 313; the sequence is LLIVLLIILAIIVMVVVGGFY. Residues 314–682 lie on the Cytoplasmic side of the membrane; that stretch reads LYRRKKYAEV…SHTIIYGDGR (369 aa). Positions 348-622 constitute a Protein kinase domain; the sequence is FNKDGRLGRG…VQYINRHQRL (275 aa). Residues 354 to 362 and lysine 376 each bind ATP; that span reads LGRGGFGEV. Residue aspartate 472 is the Proton acceptor of the active site.

It in the C-terminal section; belongs to the protein kinase superfamily. Ser/Thr protein kinase family. In the N-terminal section; belongs to the leguminous lectin family.

It is found in the cell membrane. The enzyme catalyses L-seryl-[protein] + ATP = O-phospho-L-seryl-[protein] + ADP + H(+). The catalysed reaction is L-threonyl-[protein] + ATP = O-phospho-L-threonyl-[protein] + ADP + H(+). Functionally, involved in resistance response to the pathogenic fungus Alternaria brassicicola. The chain is Putative L-type lectin-domain containing receptor kinase I.1 from Arabidopsis thaliana (Mouse-ear cress).